Reading from the N-terminus, the 415-residue chain is Fructose-1,6-bisphosphatase, chloroplastic (415 aa).

The N-terminal 57 residues, 1–57 (MASIGPATTTAVKLRSSIFNPQSSTLSPSQQCITFTKSLHSFPTATRHNVASGVRCM), are a transit peptide targeting the chloroplast. Residues Glu135, Glu164, Asp185, Leu187, and Asp188 each contribute to the Mg(2+) site. Residue 188-191 (DGSS) participates in substrate binding. Residues 207 to 232 (SPNDECIVDSDHDDESQLSAEEQRCV) are involved in light regulation. Cys231 and Cys236 are oxidised to a cystine. The substrate site is built by Asn295, Tyr327, Tyr345, Tyr347, and Lys357. Residue Glu363 participates in Mg(2+) binding.

It belongs to the FBPase class 1 family. In terms of assembly, homotetramer. It depends on Mg(2+) as a cofactor.

The protein localises to the plastid. It is found in the chloroplast. It carries out the reaction beta-D-fructose 1,6-bisphosphate + H2O = beta-D-fructose 6-phosphate + phosphate. The protein operates within carbohydrate biosynthesis; Calvin cycle. The sequence is that of Fructose-1,6-bisphosphatase, chloroplastic from Spinacia oleracea (Spinach).